The chain runs to 227 residues: MITQKGKEHLAKDKQNIYLRILSGIVLVPLFVIAILWFKPLFYILMILVGMGMLSEWYNMTYSSIPYLLIGLIIIPIPISLLTFLSMEDTNRWLIMLYFCIIWSVDSFAMIGGKTFKGAKLAPKISPKKTWSGLVTGVLSAGLVAVLASFIPNFHIENYYFSNKIYLFIISCILALIAQSSDLFISYLKRKFNIKDSGHIIPGHGGVLDRFDSIILTAPVLFFISIL.

6 helical membrane-spanning segments follow: residues 31–51 (FVIA…LVGM), 65–85 (IPYL…LTFL), 93–113 (WLIM…MIGG), 131–151 (WSGL…ASFI), 165–185 (IYLF…DLFI), and 206–226 (GVLD…FISI).

The protein belongs to the CDS family.

It localises to the cell membrane. It catalyses the reaction a 1,2-diacyl-sn-glycero-3-phosphate + CTP + H(+) = a CDP-1,2-diacyl-sn-glycerol + diphosphate. The protein operates within phospholipid metabolism; CDP-diacylglycerol biosynthesis; CDP-diacylglycerol from sn-glycerol 3-phosphate: step 3/3. The protein is Phosphatidate cytidylyltransferase (cdsA) of Rickettsia felis (strain ATCC VR-1525 / URRWXCal2) (Rickettsia azadi).